Here is a 194-residue protein sequence, read N- to C-terminus: Peptidyl-tRNA hydrolase (194 aa).

Tyrosine 17 contributes to the tRNA binding site. The Proton acceptor role is filled by histidine 22. TRNA is bound by residues phenylalanine 68, asparagine 70, and asparagine 116.

Belongs to the PTH family. In terms of assembly, monomer.

The protein resides in the cytoplasm. The catalysed reaction is an N-acyl-L-alpha-aminoacyl-tRNA + H2O = an N-acyl-L-amino acid + a tRNA + H(+). Its function is as follows. Hydrolyzes ribosome-free peptidyl-tRNAs (with 1 or more amino acids incorporated), which drop off the ribosome during protein synthesis, or as a result of ribosome stalling. Catalyzes the release of premature peptidyl moieties from peptidyl-tRNA molecules trapped in stalled 50S ribosomal subunits, and thus maintains levels of free tRNAs and 50S ribosomes. The chain is Peptidyl-tRNA hydrolase from Mannheimia succiniciproducens (strain KCTC 0769BP / MBEL55E).